The chain runs to 308 residues: Oxygen-dependent coproporphyrinogen-III oxidase (308 aa).

Ser100 contributes to the substrate binding site. A divalent metal cation-binding residues include His104 and His114. Catalysis depends on His114, which acts as the Proton donor. 116–118 is a substrate binding site; sequence NFR. A divalent metal cation contacts are provided by His153 and His183. An important for dimerization region spans residues 248 to 283; it reads YVEFNLVFDRGTIFGLQSGGRTESILSSMPPMATWK. 266 to 268 contacts substrate; it reads GGR.

Belongs to the aerobic coproporphyrinogen-III oxidase family. As to quaternary structure, homodimer. Requires a divalent metal cation as cofactor.

It is found in the cytoplasm. It catalyses the reaction coproporphyrinogen III + O2 + 2 H(+) = protoporphyrinogen IX + 2 CO2 + 2 H2O. It participates in porphyrin-containing compound metabolism; protoporphyrin-IX biosynthesis; protoporphyrinogen-IX from coproporphyrinogen-III (O2 route): step 1/1. In terms of biological role, involved in the heme biosynthesis. Catalyzes the aerobic oxidative decarboxylation of propionate groups of rings A and B of coproporphyrinogen-III to yield the vinyl groups in protoporphyrinogen-IX. This chain is Oxygen-dependent coproporphyrinogen-III oxidase, found in Francisella tularensis subsp. mediasiatica (strain FSC147).